A 384-amino-acid polypeptide reads, in one-letter code: MNVFWFIPTHGDSRYLGTAEGARAADYDYFRQVAVAADTLGYDGVLLPTGRSCEDAWVVASSLIPATKRLKFLVAIRPGLSSPGLSARMASTFDRLSGGRLLINVVTGGDSAELEGDGLFADHDTRYALTDDFLHIWRKLLAESHENGSVDFDGEHLRAKGGKLLYPPIQHPHPPLWFGGSSPAAHAIAADHIETYLTWGEPPAAVAKKIADIRARAAERGREIRFGIRLHVIVRETEEEAWRDADRLISRLDDDTIARAQQAFAKMDSEGQRRMAALHGGKRGSRQELEIYPNLWAGVGLVRGGAGTALVGNPEQVAARMREYAALGIETFILSGYPHLEESYRFAELVFPLVKGGDARRAGPLSGPFGEVVGNGYLPKVSQS.

The protein belongs to the SsuD family.

The catalysed reaction is an alkanesulfonate + FMNH2 + O2 = an aldehyde + FMN + sulfite + H2O + 2 H(+). In terms of biological role, catalyzes the desulfonation of aliphatic sulfonates. The protein is Alkanesulfonate monooxygenase of Burkholderia thailandensis (strain ATCC 700388 / DSM 13276 / CCUG 48851 / CIP 106301 / E264).